Reading from the N-terminus, the 142-residue chain is Putative pre-16S rRNA nuclease (142 aa).

The protein belongs to the YqgF nuclease family.

The protein localises to the cytoplasm. In terms of biological role, could be a nuclease involved in processing of the 5'-end of pre-16S rRNA. This is Putative pre-16S rRNA nuclease from Saccharophagus degradans (strain 2-40 / ATCC 43961 / DSM 17024).